A 367-amino-acid polypeptide reads, in one-letter code: D-alanine--D-alanine ligase (367 aa).

Positions 141–346 (KNLFAQAGLR…YPELIERLIA (206 aa)) constitute an ATP-grasp domain. 174-229 (ERELGYPCFVKPANAGSSVGISKCKQRGDLKAAFIEAFQYDRKIIIEEAIVGREIE) is a binding site for ATP. Residues D300, E313, and N315 each coordinate Mg(2+).

The protein belongs to the D-alanine--D-alanine ligase family. The cofactor is Mg(2+). Mn(2+) serves as cofactor.

Its subcellular location is the cytoplasm. The catalysed reaction is 2 D-alanine + ATP = D-alanyl-D-alanine + ADP + phosphate + H(+). It functions in the pathway cell wall biogenesis; peptidoglycan biosynthesis. Functionally, cell wall formation. The protein is D-alanine--D-alanine ligase of Geobacillus kaustophilus (strain HTA426).